A 285-amino-acid chain; its full sequence is Bifunctional protein FolD (285 aa).

Residues 166-168 and I232 each bind NADP(+); that span reads GAS.

It belongs to the tetrahydrofolate dehydrogenase/cyclohydrolase family. Homodimer.

The enzyme catalyses (6R)-5,10-methylene-5,6,7,8-tetrahydrofolate + NADP(+) = (6R)-5,10-methenyltetrahydrofolate + NADPH. It catalyses the reaction (6R)-5,10-methenyltetrahydrofolate + H2O = (6R)-10-formyltetrahydrofolate + H(+). It functions in the pathway one-carbon metabolism; tetrahydrofolate interconversion. Functionally, catalyzes the oxidation of 5,10-methylenetetrahydrofolate to 5,10-methenyltetrahydrofolate and then the hydrolysis of 5,10-methenyltetrahydrofolate to 10-formyltetrahydrofolate. This chain is Bifunctional protein FolD, found in Vibrio atlanticus (strain LGP32) (Vibrio splendidus (strain Mel32)).